Reading from the N-terminus, the 245-residue chain is MASIDLASTPLTATQNVDPNEIKKFEDMASRWWDLEGEFKPLHQINPLRLNYVLEKANGLFGKRVLDVGCGGGILAESMAREGAQVTGLDMGKEPLEVARLHALETGTKLTYIQSTVEAHAEANPHTYDVVTCMEMLEHVPDPLSVIQSCAKLVKPGGHVFFSTLNRNVKSYLFAIVGAEKLLKIVPEGTHDHNKFIRPSELLKMVDHTALQEQGITGLHYNPFTDTYRLGSNVDVNYIVHTRLF.

S-adenosyl-L-methionine-binding residues include Arg-49, Gly-69, Asp-90, and Met-134.

It belongs to the methyltransferase superfamily. UbiG/COQ3 family.

The enzyme catalyses a 3-demethylubiquinol + S-adenosyl-L-methionine = a ubiquinol + S-adenosyl-L-homocysteine + H(+). It carries out the reaction a 3-(all-trans-polyprenyl)benzene-1,2-diol + S-adenosyl-L-methionine = a 2-methoxy-6-(all-trans-polyprenyl)phenol + S-adenosyl-L-homocysteine + H(+). Its pathway is cofactor biosynthesis; ubiquinone biosynthesis. Its function is as follows. O-methyltransferase that catalyzes the 2 O-methylation steps in the ubiquinone biosynthetic pathway. This chain is Ubiquinone biosynthesis O-methyltransferase, found in Vibrio cholerae serotype O1 (strain ATCC 39541 / Classical Ogawa 395 / O395).